The primary structure comprises 396 residues: MIISAASDYRAAAQRILPPFLFHYMDGGAYSEYTLRRNVEDLSEVALRQRILKNMSDLSLETTLFNEKLSMPVALGPVGLCGMYARRGEVQAAKAADAHGIPFTLSTVSVCPIEEVAPAIKRPMWFQLYVLRDRGFMRNALERAKAAGCSTLVFTVDMPTPGARYRDAHSGMSGPNAAMRRYLQAVTHPQWAWDVGLNGRPHDLGNISAYLGKPTGLEDYIGWLANNFDPSISWKDLEWIRDFWDGPMVIKGILDPEDARDAVRFGADGIVVSNHGGRQLDGVLSSARALPAIADAVKGDIAILADSGIRNGLDVVRMIALGADTVLLGRAFLYALATAGQAGVANLLNLIEKEMKVAMTLTGAKSISEITQDSLVQVLGKELPAALAPMAKGNAA.

The FMN hydroxy acid dehydrogenase domain occupies 1–380 (MIISAASDYR…TQDSLVQVLG (380 aa)). Y24 contacts substrate. FMN is bound by residues S106 and Q127. A substrate-binding site is contributed by Y129. T155 lines the FMN pocket. R164 is a binding site for substrate. K251 lines the FMN pocket. The active-site Proton acceptor is the H275. Substrate is bound at residue R278. Residue 306 to 330 (DSGIRNGLDVVRMIALGADTVLLGR) participates in FMN binding.

Belongs to the FMN-dependent alpha-hydroxy acid dehydrogenase family. FMN serves as cofactor.

The protein localises to the cell inner membrane. The catalysed reaction is (S)-lactate + A = pyruvate + AH2. In terms of biological role, catalyzes the conversion of L-lactate to pyruvate. Is coupled to the respiratory chain. In Escherichia coli O45:K1 (strain S88 / ExPEC), this protein is L-lactate dehydrogenase.